A 411-amino-acid polypeptide reads, in one-letter code: 2,3-bisphosphoglycerate-independent phosphoglycerate mutase (411 aa).

This sequence belongs to the BPG-independent phosphoglycerate mutase family. A-PGAM subfamily.

The catalysed reaction is (2R)-2-phosphoglycerate = (2R)-3-phosphoglycerate. The protein operates within carbohydrate degradation; glycolysis; pyruvate from D-glyceraldehyde 3-phosphate: step 3/5. Its function is as follows. Catalyzes the interconversion of 2-phosphoglycerate and 3-phosphoglycerate. This Pyrobaculum aerophilum (strain ATCC 51768 / DSM 7523 / JCM 9630 / CIP 104966 / NBRC 100827 / IM2) protein is 2,3-bisphosphoglycerate-independent phosphoglycerate mutase.